The primary structure comprises 309 residues: GTP cyclohydrolase MptA (309 aa).

It belongs to the GTP cyclohydrolase IV family. As to quaternary structure, homodimer. The cofactor is Fe(2+).

The catalysed reaction is GTP + H2O = 7,8-dihydroneopterin 2',3'-cyclic phosphate + formate + diphosphate + H(+). It functions in the pathway cofactor biosynthesis; 5,6,7,8-tetrahydromethanopterin biosynthesis. Functionally, converts GTP to 7,8-dihydro-D-neopterin 2',3'-cyclic phosphate, the first intermediate in the biosynthesis of coenzyme methanopterin. This chain is GTP cyclohydrolase MptA, found in Methanococcus aeolicus (strain ATCC BAA-1280 / DSM 17508 / OCM 812 / Nankai-3).